Reading from the N-terminus, the 477-residue chain is Serine/threonine-protein kinase pakC (477 aa).

In terms of domain architecture, PH spans 13–108; it reads SPDKEGELKK…WMKAVEKGSE (96 aa). One can recognise a CRIB domain in the interval 112 to 125; that stretch reads VSQPFNLKHEVHVD. The region spanning 204–458 is the Protein kinase domain; sequence YKNMTKIGEG…ATDLLKHPFM (255 aa). ATP is bound by residues 210–218 and K233; that span reads IGEGAAGEV. The active-site Proton acceptor is D326.

Belongs to the protein kinase superfamily. STE Ser/Thr protein kinase family. STE20 subfamily. As to quaternary structure, interacts with GTP-bound racB. The cofactor is Mg(2+).

The protein localises to the cytoplasm. The protein resides in the membrane. The catalysed reaction is L-seryl-[protein] + ATP = O-phospho-L-seryl-[protein] + ADP + H(+). It carries out the reaction L-threonyl-[protein] + ATP = O-phospho-L-threonyl-[protein] + ADP + H(+). With respect to regulation, kinase activity is rapidly and transiently increased in response to chemoattractant stimulation. Has role in the regulation of chemotaxis. In Dictyostelium discoideum (Social amoeba), this protein is Serine/threonine-protein kinase pakC (pakC).